The following is a 62-amino-acid chain: Photosystem II reaction center protein Z (62 aa).

2 helical membrane passes run 8–28 and 41–61; these read SVFALIAISTLLVIGVPVALA and FSGVSLWIGSVFLVGILNSFI.

The protein belongs to the PsbZ family. PSII is composed of 1 copy each of membrane proteins PsbA, PsbB, PsbC, PsbD, PsbE, PsbF, PsbH, PsbI, PsbJ, PsbK, PsbL, PsbM, PsbT, PsbY, PsbZ, Psb30/Ycf12, at least 3 peripheral proteins of the oxygen-evolving complex and a large number of cofactors. It forms dimeric complexes.

It localises to the plastid. The protein resides in the chloroplast thylakoid membrane. Its function is as follows. May control the interaction of photosystem II (PSII) cores with the light-harvesting antenna, regulates electron flow through the 2 photosystem reaction centers. PSII is a light-driven water plastoquinone oxidoreductase, using light energy to abstract electrons from H(2)O, generating a proton gradient subsequently used for ATP formation. The sequence is that of Photosystem II reaction center protein Z from Cryptomeria japonica (Japanese cedar).